The chain runs to 213 residues: Thiopurine S-methyltransferase (213 aa).

S-adenosyl-L-methionine is bound by residues W10, L45, E66, and R121.

It belongs to the class I-like SAM-binding methyltransferase superfamily. TPMT family.

It localises to the cytoplasm. The enzyme catalyses S-adenosyl-L-methionine + a thiopurine = S-adenosyl-L-homocysteine + a thiopurine S-methylether.. This Aliivibrio fischeri (strain ATCC 700601 / ES114) (Vibrio fischeri) protein is Thiopurine S-methyltransferase.